Here is a 188-residue protein sequence, read N- to C-terminus: Peptide deformylase (188 aa).

The segment at Ala-70–Glu-90 is disordered. Residues Cys-113 and His-155 each contribute to the Fe cation site. Glu-156 is a catalytic residue. His-159 is a binding site for Fe cation.

It belongs to the polypeptide deformylase family. The cofactor is Fe(2+).

It carries out the reaction N-terminal N-formyl-L-methionyl-[peptide] + H2O = N-terminal L-methionyl-[peptide] + formate. Functionally, removes the formyl group from the N-terminal Met of newly synthesized proteins. Requires at least a dipeptide for an efficient rate of reaction. N-terminal L-methionine is a prerequisite for activity but the enzyme has broad specificity at other positions. This is Peptide deformylase from Novosphingobium aromaticivorans (strain ATCC 700278 / DSM 12444 / CCUG 56034 / CIP 105152 / NBRC 16084 / F199).